A 233-amino-acid polypeptide reads, in one-letter code: Nickel import system ATP-binding protein NikE (233 aa).

Positions 2 to 228 (IELKHVTFGY…DRHPYTKELV (227 aa)) constitute an ABC transporter domain. 35-42 (GESGCGKS) is an ATP binding site.

This sequence belongs to the ABC transporter superfamily. As to quaternary structure, the complex is composed of two ATP-binding proteins (NikD and NikE), two transmembrane proteins (NikB and NikC) and a solute-binding protein (NikA).

Its subcellular location is the cell membrane. It carries out the reaction Ni(2+)(out) + ATP + H2O = Ni(2+)(in) + ADP + phosphate + H(+). Part of the ABC transporter complex NikABCDE (Opp2) involved in nickel import. Probably responsible for energy coupling to the transport system. The polypeptide is Nickel import system ATP-binding protein NikE (Staphylococcus aureus (strain Mu50 / ATCC 700699)).